Reading from the N-terminus, the 239-residue chain is Phosphoribosylaminoimidazole-succinocarboxamide synthase (239 aa).

This sequence belongs to the SAICAR synthetase family.

The enzyme catalyses 5-amino-1-(5-phospho-D-ribosyl)imidazole-4-carboxylate + L-aspartate + ATP = (2S)-2-[5-amino-1-(5-phospho-beta-D-ribosyl)imidazole-4-carboxamido]succinate + ADP + phosphate + 2 H(+). Its pathway is purine metabolism; IMP biosynthesis via de novo pathway; 5-amino-1-(5-phospho-D-ribosyl)imidazole-4-carboxamide from 5-amino-1-(5-phospho-D-ribosyl)imidazole-4-carboxylate: step 1/2. This chain is Phosphoribosylaminoimidazole-succinocarboxamide synthase, found in Shouchella clausii (strain KSM-K16) (Alkalihalobacillus clausii).